A 150-amino-acid chain; its full sequence is UPF0756 membrane protein STH2648 (150 aa).

A run of 4 helical transmembrane segments spans residues 13-33 (ALGVVARNALIVTAAGVVLIL), 52-72 (AGLIFLLIAVLVPFATGEVGW), 85-105 (LAAILGGIIAAVLSGYGVTLL), and 111-131 (VIVGMVVGTILGVVLFKGIPV).

This sequence belongs to the UPF0756 family.

It localises to the cell membrane. This is UPF0756 membrane protein STH2648 from Symbiobacterium thermophilum (strain DSM 24528 / JCM 14929 / IAM 14863 / T).